The chain runs to 174 residues: 3-hydroxyanthranilate 3,4-dioxygenase (174 aa).

Position 47 (Arg47) interacts with O2. Residues His51, Glu57, and His95 each coordinate Fe cation. Glu57 contacts substrate. Positions 99 and 110 each coordinate substrate. Fe cation is bound by residues Cys125, Cys128, Cys162, and Cys165.

Belongs to the 3-HAO family. Homodimer. Fe(2+) serves as cofactor.

The catalysed reaction is 3-hydroxyanthranilate + O2 = (2Z,4Z)-2-amino-3-carboxymuconate 6-semialdehyde. The protein operates within cofactor biosynthesis; NAD(+) biosynthesis; quinolinate from L-kynurenine: step 3/3. Catalyzes the oxidative ring opening of 3-hydroxyanthranilate to 2-amino-3-carboxymuconate semialdehyde, which spontaneously cyclizes to quinolinate. The protein is 3-hydroxyanthranilate 3,4-dioxygenase of Paraburkholderia phytofirmans (strain DSM 17436 / LMG 22146 / PsJN) (Burkholderia phytofirmans).